A 290-amino-acid chain; its full sequence is MSAAILDGKALAARIQAELTCEVQSLQERFGRPPGLSVLWVGDNPASAAYVRNKNKSGQAVGIDVAKSQHLKASLSETQLLALIDRLNADVTVDGILVQLPLPEHIDSGRVLNRIAPEKDVDGLHPVNLGRLVRGEPGLRSCTPAGVMRILSEAGVPLAGKTAVVIGRSILVGKPVALMLLEKDATVITTHSRTADLAAITQMADVLVVAAGRPELVTAAMVRPGAVVIDVGINRVTDYEGNSRLVGDVDFDSVRDVAAAITPVPRGVGPMTVTMLLANTVQSYKQRLIE.

NADP(+) contacts are provided by residues 167 to 169 (GRS), Ser192, and Ile233.

Belongs to the tetrahydrofolate dehydrogenase/cyclohydrolase family. In terms of assembly, homodimer.

It catalyses the reaction (6R)-5,10-methylene-5,6,7,8-tetrahydrofolate + NADP(+) = (6R)-5,10-methenyltetrahydrofolate + NADPH. The enzyme catalyses (6R)-5,10-methenyltetrahydrofolate + H2O = (6R)-10-formyltetrahydrofolate + H(+). It functions in the pathway one-carbon metabolism; tetrahydrofolate interconversion. Its function is as follows. Catalyzes the oxidation of 5,10-methylenetetrahydrofolate to 5,10-methenyltetrahydrofolate and then the hydrolysis of 5,10-methenyltetrahydrofolate to 10-formyltetrahydrofolate. This Gloeobacter violaceus (strain ATCC 29082 / PCC 7421) protein is Bifunctional protein FolD.